The primary structure comprises 411 residues: Tyrosine--tRNA ligase (411 aa).

L-tyrosine is bound at residue Y36. A 'HIGH' region motif is present at residues 41–50 (PTADSLHVGH). Positions 172 and 176 each coordinate L-tyrosine. Residues 232–236 (KMGKT) carry the 'KMSKS' region motif. K235 provides a ligand contact to ATP. In terms of domain architecture, S4 RNA-binding spans 344-409 (YSIANILVVT…GKKNHIKVII (66 aa)).

It belongs to the class-I aminoacyl-tRNA synthetase family. TyrS type 1 subfamily. As to quaternary structure, homodimer.

Its subcellular location is the cytoplasm. The enzyme catalyses tRNA(Tyr) + L-tyrosine + ATP = L-tyrosyl-tRNA(Tyr) + AMP + diphosphate + H(+). Its function is as follows. Catalyzes the attachment of tyrosine to tRNA(Tyr) in a two-step reaction: tyrosine is first activated by ATP to form Tyr-AMP and then transferred to the acceptor end of tRNA(Tyr). This Malacoplasma penetrans (strain HF-2) (Mycoplasma penetrans) protein is Tyrosine--tRNA ligase.